An 885-amino-acid chain; its full sequence is Sensor histidine kinase KdpD (885 aa).

Transmembrane regions (helical) follow at residues 384–404 (AIDM…GLWI), 415–435 (IILM…RSFI), 436–456 (IGFL…TEPR), and 464–484 (FDYP…SALL). The region spanning 660 to 880 (SISHDIRTPL…IFYFNIYTDF (221 aa)) is the Histidine kinase domain. H663 is modified (phosphohistidine; by autocatalysis).

It is found in the membrane. The catalysed reaction is ATP + protein L-histidine = ADP + protein N-phospho-L-histidine.. Its activity is regulated as follows. Cyclic di-AMP is a negative regulator of the Kdp system. Functionally, member of the two-component regulatory system KdpD/KdpE that regulates the transcription of a series of virulence factors through sensing external K(+) concentrations. Also regulates capsular polysaccharide production. May function as a membrane-associated protein kinase that phosphorylates KdpE in response to environmental signals. In turn, KpdE functions as a transcriptional regulator by direct binding to promoter regions of target genes including spa, hla, aur and geh. The polypeptide is Sensor histidine kinase KdpD (Staphylococcus aureus (strain NCTC 8325 / PS 47)).